The chain runs to 290 residues: Porphobilinogen deaminase (290 aa).

Cys-237 carries the S-(dipyrrolylmethanemethyl)cysteine modification.

It belongs to the HMBS family. As to quaternary structure, monomer. The cofactor is dipyrromethane.

It catalyses the reaction 4 porphobilinogen + H2O = hydroxymethylbilane + 4 NH4(+). It participates in porphyrin-containing compound metabolism; protoporphyrin-IX biosynthesis; coproporphyrinogen-III from 5-aminolevulinate: step 2/4. In terms of biological role, tetrapolymerization of the monopyrrole PBG into the hydroxymethylbilane pre-uroporphyrinogen in several discrete steps. This Clostridium botulinum (strain 657 / Type Ba4) protein is Porphobilinogen deaminase.